The primary structure comprises 429 residues: Adenylosuccinate synthetase (429 aa).

GTP contacts are provided by residues 12-18 and 40-42; these read GDEGKGK and GHT. The active-site Proton acceptor is the Asp13. Asp13 and Gly40 together coordinate Mg(2+). Residues 13–16, 38–41, Thr129, Arg143, Gln223, Thr238, and Arg302 each bind IMP; these read DEGK and NAGH. His41 functions as the Proton donor in the catalytic mechanism. Substrate is bound at residue 298 to 304; sequence TVTGRPR. GTP contacts are provided by residues Arg304, 330 to 332, and 412 to 414; these read KLD and STS.

The protein belongs to the adenylosuccinate synthetase family. In terms of assembly, homodimer. Mg(2+) is required as a cofactor.

The protein localises to the cytoplasm. The catalysed reaction is IMP + L-aspartate + GTP = N(6)-(1,2-dicarboxyethyl)-AMP + GDP + phosphate + 2 H(+). Its pathway is purine metabolism; AMP biosynthesis via de novo pathway; AMP from IMP: step 1/2. In terms of biological role, plays an important role in the de novo pathway of purine nucleotide biosynthesis. Catalyzes the first committed step in the biosynthesis of AMP from IMP. The sequence is that of Adenylosuccinate synthetase from Rhodospirillum rubrum (strain ATCC 11170 / ATH 1.1.1 / DSM 467 / LMG 4362 / NCIMB 8255 / S1).